The primary structure comprises 152 residues: MKTPIELKILDSRIGSEFPLPAYATPGSAGMDLRAMIDTTLTIAPGETVLIPTGIAIHVADPGLAAVILPRSGLGHKHGIVLGNLVGLIDSDYQGPLMVSCWNRSDSPFALEIGDRLAQLVFVPVVQAQFKLVDEFDSSDRGEGGFGHSGTK.

Residues 71-73 (RSG), Asn-84, 88-90 (LID), and Met-98 contribute to the substrate site.

The protein belongs to the dUTPase family. It depends on Mg(2+) as a cofactor.

It catalyses the reaction dUTP + H2O = dUMP + diphosphate + H(+). Its pathway is pyrimidine metabolism; dUMP biosynthesis; dUMP from dCTP (dUTP route): step 2/2. Functionally, this enzyme is involved in nucleotide metabolism: it produces dUMP, the immediate precursor of thymidine nucleotides and it decreases the intracellular concentration of dUTP so that uracil cannot be incorporated into DNA. In Shewanella baltica (strain OS185), this protein is Deoxyuridine 5'-triphosphate nucleotidohydrolase.